A 211-amino-acid chain; its full sequence is Nucleoside triphosphate pyrophosphatase (211 aa).

Asp78 acts as the Proton acceptor in catalysis.

The protein belongs to the Maf family. It depends on a divalent metal cation as a cofactor.

It localises to the cytoplasm. It carries out the reaction a ribonucleoside 5'-triphosphate + H2O = a ribonucleoside 5'-phosphate + diphosphate + H(+). The enzyme catalyses a 2'-deoxyribonucleoside 5'-triphosphate + H2O = a 2'-deoxyribonucleoside 5'-phosphate + diphosphate + H(+). In terms of biological role, nucleoside triphosphate pyrophosphatase. May have a dual role in cell division arrest and in preventing the incorporation of modified nucleotides into cellular nucleic acids. The protein is Nucleoside triphosphate pyrophosphatase of Mycolicibacterium smegmatis (strain ATCC 700084 / mc(2)155) (Mycobacterium smegmatis).